A 347-amino-acid polypeptide reads, in one-letter code: Protein phosphatase 2C homolog 1 (347 aa).

The tract at residues 1–41 is disordered; that stretch reads MKGSHPNAGSLLEPLHKLNPFSENSTSGHRKNASDHSADGE. The span at 32-41 shows a compositional bias: basic and acidic residues; sequence NASDHSADGE. Residues 71–323 enclose the PPM-type phosphatase domain; the sequence is LAGLMEDKNQ…DNITCIVVNL (253 aa). The Mn(2+) site is built by Asp109, Gly110, Asp275, and Asp314.

The protein belongs to the PP2C family. Monomer. It depends on Mg(2+) as a cofactor. Mn(2+) is required as a cofactor.

The catalysed reaction is O-phospho-L-seryl-[protein] + H2O = L-seryl-[protein] + phosphate. The enzyme catalyses O-phospho-L-threonyl-[protein] + H2O = L-threonyl-[protein] + phosphate. Its function is as follows. Serine and threonine phosphatase. Has a specialized role in the heat shock response. May be responsible for the dephosphorylation of hsp90. This chain is Protein phosphatase 2C homolog 1 (ptc1), found in Schizosaccharomyces pombe (strain 972 / ATCC 24843) (Fission yeast).